Here is a 197-residue protein sequence, read N- to C-terminus: Pinin homolog 1 (197 aa).

The interval 30–73 is disordered; that stretch reads LDGKVNNEDSHMEIDQPEGSMEEDDHRQVKEKNTSENSVEQKRG. Basic and acidic residues-rich tracts occupy residues 34 to 43 and 53 to 71; these read VNNEDSHMEI and DDHR…VEQK.

The protein belongs to the pinin family.

It is found in the nucleus. It localises to the cytoplasm. Transcriptional activator that may participate in the regulation of mRNA splicing. This chain is Pinin homolog 1 (pnn1), found in Schizosaccharomyces pombe (strain 972 / ATCC 24843) (Fission yeast).